A 239-amino-acid chain; its full sequence is MNPELFAETLSKYNFKLSPVQEQQFKTYFKELVRVNEHVNLTRITDEDEVYLKHFYDSVTPLLLWPEVFAEGAKLCDVGAGAGFPSLPIKILRPDLEVTIVDSLGKRLNFLSDLLEKLGIEGVNLVHGRAEDVGQNPDYREKFDLVTARAVARMSVLSEYCLPLAKVGGKFLALKGPRADEELEDAKSALEKLGGEVVFTRVITLPGSTEVRTLVLVDKVEATPGKYPRQAGTPNRKPL.

Residues glycine 79, phenylalanine 84, 130 to 131, and arginine 149 each bind S-adenosyl-L-methionine; that span reads AE.

This sequence belongs to the methyltransferase superfamily. RNA methyltransferase RsmG family.

It localises to the cytoplasm. Specifically methylates the N7 position of a guanine in 16S rRNA. The sequence is that of Ribosomal RNA small subunit methyltransferase G from Lactobacillus delbrueckii subsp. bulgaricus (strain ATCC 11842 / DSM 20081 / BCRC 10696 / JCM 1002 / NBRC 13953 / NCIMB 11778 / NCTC 12712 / WDCM 00102 / Lb 14).